A 464-amino-acid chain; its full sequence is Aspartyl protease AED1 (464 aa).

An N-terminal signal peptide occupies residues 1 to 25 (MSIMRNFLSMIIMLCVCLNWCFAEG). A Peptidase A1 domain is found at 132-460 (YIVTIGIGTP…DVAGGRVGFA (329 aa)). Residues D150 and D345 contribute to the active site. A disulfide bridge connects residues C384 and C425.

It belongs to the peptidase A1 family.

Its subcellular location is the secreted. It is found in the extracellular space. The protein localises to the apoplast. In terms of biological role, aspartyl protease involved in a homeostatic feedback mechanism regulating systemic immunity. Has only mild or no influence on local defenses. Acts downstream of salicylic acid to suppress systemic immunity. The polypeptide is Aspartyl protease AED1 (Arabidopsis thaliana (Mouse-ear cress)).